The sequence spans 258 residues: Glucose 1-dehydrogenase 2 (258 aa).

11–35 (IVTGSSKGIGKAIAERFGKEKMNVV) serves as a coordination point for NADP(+). Residue Ser146 coordinates substrate. Catalysis depends on Tyr159, which acts as the Proton acceptor.

Belongs to the short-chain dehydrogenases/reductases (SDR) family. As to quaternary structure, homotetramer.

The catalysed reaction is D-glucose + NAD(+) = D-glucono-1,5-lactone + NADH + H(+). The enzyme catalyses D-glucose + NADP(+) = D-glucono-1,5-lactone + NADPH + H(+). This is Glucose 1-dehydrogenase 2 (ycdF) from Bacillus subtilis (strain 168).